A 338-amino-acid chain; its full sequence is Egl nine homolog 1 (338 aa).

A compositionally biased stretch (low complexity) spans 1–11 (PRAQPAPAQPR). Residues 1–99 (PRAQPAPAQP…PSGGLRPNGQ (99 aa)) form a disordered region. A Phosphoserine modification is found at Ser52. 2 positions are modified to S-nitrosocysteine: Cys116 and Cys123. The segment at 156 to 166 (VSQKSDSSKDI) is beta(2)beta(3) 'finger-like' loop. The region spanning 209 to 307 (GRTKAMVACY…RYAITVWYFD (99 aa)) is the Fe2OG dioxygenase domain. Cys217 carries the post-translational modification S-nitrosocysteine. The Fe cation site is built by His228 and Asp230. Cys238 and Cys241 each carry S-nitrosocysteine. His289 is a Fe cation binding site. Arg298 provides a ligand contact to 2-oxoglutarate.

In terms of assembly, monomer. Interacts with ING4; the interaction inhibits the hydroxylation of HIF alpha proteins. Interacts with PTGES3 (via PXLE motif); thereby recruiting EGLN1 to the HSP90 pathway to facilitate HIF alpha proteins hydroxylation. Interacts with LIMD1. Found in a complex composed of LIMD1, VHL, EGLN1/PHD2, ELOB and CUL2. Interacts with EPAS1. Interacts with CBFA2T3 and HIF1A. It depends on Fe(2+) as a cofactor. L-ascorbate serves as cofactor. Post-translationally, S-nitrosylation inhibits the enzyme activity up to 60% under aerobic conditions. Chelation of Fe(2+) has no effect on the S-nitrosylation. It is uncertain whether nitrosylation occurs on Cys-238 or Cys-241. Expressed in heart, liver, kidney, brain, liver and testis. Highest levels in heart, lowest in liver.

Its subcellular location is the cytoplasm. The protein resides in the nucleus. It carries out the reaction L-prolyl-[hypoxia-inducible factor alpha subunit] + 2-oxoglutarate + O2 = trans-4-hydroxy-L-prolyl-[hypoxia-inducible factor alpha subunit] + succinate + CO2. With respect to regulation, increased activation in hypoxia. Hydroxylation of the C-terminal ODD domain (CODD) proline of HIF1A is activated by cyclosporin A (CsA). Cellular oxygen sensor that catalyzes, under normoxic conditions, the post-translational formation of 4-hydroxyproline in hypoxia-inducible factor (HIF) alpha proteins. Hydroxylates a specific proline found in each of the oxygen-dependent degradation (ODD) domains (N-terminal, NODD, and C-terminal, CODD) of HIF1A. Also hydroxylates HIF2A. Has a preference for the CODD site for both HIF1A and HIF1B. Hydroxylated HIFs are then targeted for proteasomal degradation via the von Hippel-Lindau ubiquitination complex. Under hypoxic conditions, the hydroxylation reaction is attenuated allowing HIFs to escape degradation resulting in their translocation to the nucleus, heterodimerization with HIF1B, and increased expression of hypoxy-inducible genes. EGLN1 is the most important isozyme under normoxia and, through regulating the stability of HIF1, involved in various hypoxia-influenced processes such as angiogenesis in retinal and cardiac functionality. Target proteins are preferentially recognized via a LXXLAP motif. This Rattus norvegicus (Rat) protein is Egl nine homolog 1 (Egln1).